The chain runs to 883 residues: MPSLNDIRSTFLDYFRRNGHRVVESSPLVPRNDPTLMFTNSGMVQFKNCFTGLEHRDYTRATTAQKCVRAGGKHNDLDNVGYTARHHTFFEMLGNFSFGDYFKSEAIPFAWELLTRDFDIPREKLLVTVYHTDDEAASIWKKVAGLPDDRIIRIPTNDNFWMMGPTGPCGPCTEIFYDHGPSIWGGPPGSADEDGDRFIEIWNLVFMQNEQHPDGSMTPLPKQSIDTGMGLERIGALLQGKHDNYDTDLMRSLIEASAHATSTDPDGTGKTHHRVIADHLRSTSFLIADGVMPSNEGRGYVLRRIMRRAMRHAHLLGAQDPVMHRLVPALVRQMGAAYPELTRGQALIEETLKLEETRFRQTLDRGLRLLEDELDRLPEGSPLPGEAAFKLYDTYGFPLDLTQDALREKGRKVDVEGFEAAMAEQKAKARASWSGSGETKDAAIWFDLAERHGATEFLGYDTEKAEGQILAIVAGGVDTASATPGQTVQIILNQTPFYAESGGQVGDTGELRTDTGRARITDVRKGQGLFLHFAEVTEGEIRPGQGAALEVDHARRSAIRANHSATHLLHEALRRALGDHVAQRGSLNAPDRLRFDFSHSKALSAEELATVEAEVNQFIRSNGMVETRIMSPDDARALGAQALFGEKYGDEVRVVSMGTLAGSGKGMDGQTYSLELCGGTHVARLGDIGLCVILGDSASSAGVRRIEALTGEGALAHLNEQMQRLAEVAATLKASPAEMVDRVKALVEERRQLQNEVAQLRREAAMGGGAAAEAKDIGGVKFLAQIVQGVPGKDMPGLIDEMKARVGSGAVLLISDTAGKAALAAGVTPDLTDRLSAVALVKAAAEALGGRGGGGRPDMAQAGAADASQAEAAIRAVEAVIGG.

Residues H563, H567, C677, and H681 each coordinate Zn(2+).

The protein belongs to the class-II aminoacyl-tRNA synthetase family. Requires Zn(2+) as cofactor.

Its subcellular location is the cytoplasm. It carries out the reaction tRNA(Ala) + L-alanine + ATP = L-alanyl-tRNA(Ala) + AMP + diphosphate. In terms of biological role, catalyzes the attachment of alanine to tRNA(Ala) in a two-step reaction: alanine is first activated by ATP to form Ala-AMP and then transferred to the acceptor end of tRNA(Ala). Also edits incorrectly charged Ser-tRNA(Ala) and Gly-tRNA(Ala) via its editing domain. The chain is Alanine--tRNA ligase from Cereibacter sphaeroides (strain ATCC 17025 / ATH 2.4.3) (Rhodobacter sphaeroides).